The following is a 615-amino-acid chain: Zinc finger protein 181 (615 aa).

Residues 48–120 (VTFSDVAIDF…EKKLSKGLIP (73 aa)) form the KRAB domain. Glycyl lysine isopeptide (Lys-Gly) (interchain with G-Cter in SUMO2) cross-links involve residues Lys153 and Lys170. 11 consecutive C2H2-type zinc fingers follow at residues 281–303 (YTCS…WRIH), 309–331 (YECR…LISH), 337–359 (YKCI…QSTH), 365–387 (YECM…LRIH), 393–415 (YECR…QKIH), 421–443 (YECR…QRIH), 449–471 (YECN…QSIH), 477–499 (FECQ…LRNH), 505–527 (YECS…HRIH), 533–555 (YECI…QRIH), and 561–583 (YKCN…QRVH).

This sequence belongs to the krueppel C2H2-type zinc-finger protein family.

Its subcellular location is the nucleus. Functionally, may be involved in transcriptional regulation. The chain is Zinc finger protein 181 (ZNF181) from Pongo abelii (Sumatran orangutan).